Reading from the N-terminus, the 391-residue chain is Chorismate synthase (391 aa).

Residue Arg-48 coordinates NADP(+). Residues 126–128, Gly-286, 301–305, and Arg-328 each bind FMN; these read RAS and KPTSS.

Belongs to the chorismate synthase family. It depends on FMNH2 as a cofactor.

It catalyses the reaction 5-O-(1-carboxyvinyl)-3-phosphoshikimate = chorismate + phosphate. It participates in metabolic intermediate biosynthesis; chorismate biosynthesis; chorismate from D-erythrose 4-phosphate and phosphoenolpyruvate: step 7/7. Functionally, catalyzes the anti-1,4-elimination of the C-3 phosphate and the C-6 proR hydrogen from 5-enolpyruvylshikimate-3-phosphate (EPSP) to yield chorismate, which is the branch point compound that serves as the starting substrate for the three terminal pathways of aromatic amino acid biosynthesis. This reaction introduces a second double bond into the aromatic ring system. The protein is Chorismate synthase of Saccharolobus solfataricus (strain ATCC 35092 / DSM 1617 / JCM 11322 / P2) (Sulfolobus solfataricus).